The primary structure comprises 157 residues: Small ribosomal subunit protein uS7 (157 aa).

This sequence belongs to the universal ribosomal protein uS7 family. Part of the 30S ribosomal subunit. Contacts proteins S9 and S11.

Its function is as follows. One of the primary rRNA binding proteins, it binds directly to 16S rRNA where it nucleates assembly of the head domain of the 30S subunit. Is located at the subunit interface close to the decoding center, probably blocks exit of the E-site tRNA. The polypeptide is Small ribosomal subunit protein uS7 (Eikenella corrodens).